Reading from the N-terminus, the 984-residue chain is Putative formate dehydrogenase SAUSA300_2258 (984 aa).

Positions Glu-3–Asp-79 constitute a 2Fe-2S ferredoxin-type domain. Residues Cys-37, Cys-48, Cys-51, and Cys-63 each contribute to the [2Fe-2S] cluster site. Positions Asp-79–Gly-119 constitute a 4Fe-4S His(Cys)3-ligated-type domain. [4Fe-4S] cluster-binding residues include His-95, Cys-99, Cys-102, Cys-109, Cys-147, Cys-150, Cys-153, Cys-157, Cys-190, Cys-193, Cys-196, Cys-200, Cys-264, Cys-267, Cys-271, and Cys-299. 4Fe-4S ferredoxin-type domains follow at residues Pro-138–Thr-165 and Asn-181–Glu-211. Positions Met-252 to Lys-984 are formate dehydrogenase. One can recognise a 4Fe-4S Mo/W bis-MGD-type domain in the interval Ile-257–Gln-313.

It in the C-terminal section; belongs to the prokaryotic molybdopterin-containing oxidoreductase family. Requires [2Fe-2S] cluster as cofactor. It depends on [4Fe-4S] cluster as a cofactor. Mo-bis(molybdopterin guanine dinucleotide) is required as a cofactor.

It carries out the reaction formate + NAD(+) = CO2 + NADH. The polypeptide is Putative formate dehydrogenase SAUSA300_2258 (Staphylococcus aureus (strain USA300)).